The following is a 141-amino-acid chain: Nucleoside diphosphate kinase (141 aa).

Residues Lys11, Phe59, Arg87, Thr93, Arg104, and Asn114 each contribute to the ATP site. Residue His117 is the Pros-phosphohistidine intermediate of the active site.

Belongs to the NDK family. In terms of assembly, homotetramer. Requires Mg(2+) as cofactor.

It localises to the cytoplasm. The enzyme catalyses a 2'-deoxyribonucleoside 5'-diphosphate + ATP = a 2'-deoxyribonucleoside 5'-triphosphate + ADP. It carries out the reaction a ribonucleoside 5'-diphosphate + ATP = a ribonucleoside 5'-triphosphate + ADP. Its function is as follows. Major role in the synthesis of nucleoside triphosphates other than ATP. The ATP gamma phosphate is transferred to the NDP beta phosphate via a ping-pong mechanism, using a phosphorylated active-site intermediate. The chain is Nucleoside diphosphate kinase from Cupriavidus taiwanensis (strain DSM 17343 / BCRC 17206 / CCUG 44338 / CIP 107171 / LMG 19424 / R1) (Ralstonia taiwanensis (strain LMG 19424)).